The primary structure comprises 348 residues: (+)-germacrene D synthase (348 aa).

Mg(2+)-binding residues include Asp-97, Asp-101, Asn-242, and Ser-246. The DDXXD motif motif lies at 97–101 (DDILD).

It belongs to the terpene synthase family. The cofactor is Mg(2+).

The enzyme catalyses (2E,6E)-farnesyl diphosphate = (+)-germacrene D + diphosphate. The protein operates within secondary metabolite biosynthesis; terpenoid biosynthesis. Functionally, sesquiterpene synthase converting farnesyl diphosphate to eight sesquiterpenes, with (+)-germacrene D and an unidentified oxygenated sesquiterpene as the major products. Has no diterpene synthase activity. The sequence is that of (+)-germacrene D synthase from Selaginella moellendorffii (Spikemoss).